A 561-amino-acid polypeptide reads, in one-letter code: Glutamate--tRNA ligase (561 aa).

The short motif at 107 to 117 is the 'HIGH' region element; the sequence is PNPSGPLHLGH.

This sequence belongs to the class-I aminoacyl-tRNA synthetase family. Glutamate--tRNA ligase type 2 subfamily.

Its subcellular location is the cytoplasm. It carries out the reaction tRNA(Glu) + L-glutamate + ATP = L-glutamyl-tRNA(Glu) + AMP + diphosphate. Its function is as follows. Catalyzes the attachment of glutamate to tRNA(Glu) in a two-step reaction: glutamate is first activated by ATP to form Glu-AMP and then transferred to the acceptor end of tRNA(Glu). This Methanospirillum hungatei JF-1 (strain ATCC 27890 / DSM 864 / NBRC 100397 / JF-1) protein is Glutamate--tRNA ligase.